We begin with the raw amino-acid sequence, 490 residues long: Glutamyl-tRNA(Gln) amidotransferase subunit A (490 aa).

Residues lysine 78 and serine 159 each act as charge relay system in the active site. Catalysis depends on serine 183, which acts as the Acyl-ester intermediate.

The protein belongs to the amidase family. GatA subfamily. As to quaternary structure, heterotrimer of A, B and C subunits.

It catalyses the reaction L-glutamyl-tRNA(Gln) + L-glutamine + ATP + H2O = L-glutaminyl-tRNA(Gln) + L-glutamate + ADP + phosphate + H(+). In terms of biological role, allows the formation of correctly charged Gln-tRNA(Gln) through the transamidation of misacylated Glu-tRNA(Gln) in organisms which lack glutaminyl-tRNA synthetase. The reaction takes place in the presence of glutamine and ATP through an activated gamma-phospho-Glu-tRNA(Gln). In Paramagnetospirillum magneticum (strain ATCC 700264 / AMB-1) (Magnetospirillum magneticum), this protein is Glutamyl-tRNA(Gln) amidotransferase subunit A.